We begin with the raw amino-acid sequence, 329 residues long: Cytosolic arginine sensor for mTORC1 subunit 2 (329 aa).

ACT domains are found at residues 72–140 (ADAT…HTLS) and 262–322 (ELWK…HALK).

This sequence belongs to the GATS family. As to quaternary structure, forms homodimers and heterodimers with CASTOR1. Interacts with the GATOR2 complex which is composed of MIOS, SEC13, SEH1L, WDR24 and WDR59; the interaction is not regulated by arginine.

The protein localises to the cytoplasm. It is found in the cytosol. Its function is as follows. Functions as a negative regulator of the TORC1 signaling pathway through the GATOR complex. As part of homodimers or heterodimers with CASTOR1, directly binds and inhibits the GATOR subcomplex GATOR2 and thereby mTORC1. Does not directly bind arginine, but binding of arginine to CASTOR1 disrupts the interaction of CASTOR2-containing heterodimers with GATOR2 which can in turn activate mTORC1 and the TORC1 signaling pathway. This is Cytosolic arginine sensor for mTORC1 subunit 2 from Mus musculus (Mouse).